We begin with the raw amino-acid sequence, 178 residues long: Cytochrome b6-f complex iron-sulfur subunit (178 aa).

The chain crosses the membrane as a helical span at residues Leu-20–Met-42. Residues Lys-65–Val-161 form the Rieske domain. Residues Cys-107, His-109, Cys-125, and His-128 each coordinate [2Fe-2S] cluster. An intrachain disulfide couples Cys-112 to Cys-127.

It belongs to the Rieske iron-sulfur protein family. As to quaternary structure, the 4 large subunits of the cytochrome b6-f complex are cytochrome b6, subunit IV (17 kDa polypeptide, PetD), cytochrome f and the Rieske protein, while the 4 small subunits are PetG, PetL, PetM and PetN. The complex functions as a dimer. Requires [2Fe-2S] cluster as cofactor.

It localises to the cellular thylakoid membrane. The enzyme catalyses 2 oxidized [plastocyanin] + a plastoquinol + 2 H(+)(in) = 2 reduced [plastocyanin] + a plastoquinone + 4 H(+)(out). Functionally, component of the cytochrome b6-f complex, which mediates electron transfer between photosystem II (PSII) and photosystem I (PSI), cyclic electron flow around PSI, and state transitions. This chain is Cytochrome b6-f complex iron-sulfur subunit, found in Prochlorococcus marinus (strain MIT 9515).